A 359-amino-acid chain; its full sequence is DNA integrity scanning protein DisA (359 aa).

A DAC domain is found at 7–146; that stretch reads DDIFRATLAA…GRRYVLDGSA (140 aa). ATP-binding positions include G74, L92, and 105 to 109; that span reads TRHRT.

Belongs to the DisA family. In terms of assembly, homooctamer. Mg(2+) is required as a cofactor.

The catalysed reaction is 2 ATP = 3',3'-c-di-AMP + 2 diphosphate. Participates in a DNA-damage check-point that is active prior to asymmetric division when DNA is damaged. DisA forms globular foci that rapidly scan along the chromosomes during sporulation, searching for lesions. When a lesion is present, DisA pauses at the lesion site. This triggers a cellular response that culminates in a temporary block in sporulation initiation. Functionally, also has diadenylate cyclase activity, catalyzing the condensation of 2 ATP molecules into cyclic di-AMP (c-di-AMP). c-di-AMP acts as a signaling molecule that couples DNA integrity with progression of sporulation. The rise in c-di-AMP level generated by DisA while scanning the chromosome, operates as a positive signal that advances sporulation; upon encountering a lesion, the DisA focus arrests at the damaged site and halts c-di-AMP synthesis. This Frankia casuarinae (strain DSM 45818 / CECT 9043 / HFP020203 / CcI3) protein is DNA integrity scanning protein DisA.